The chain runs to 475 residues: Proton-coupled amino acid transporter 1 (475 aa).

A compositionally biased stretch (basic and acidic residues) spans 1–15 (MSTQRLRNEDYHDYS). Residues 1–32 (MSTQRLRNEDYHDYSSTDVSPEESPSEGLGSF) are disordered. Residues 1–50 (MSTQRLRNEDYHDYSSTDVSPEESPSEGLGSFSPGSYQRLGENSSMTWFQ) lie on the Cytoplasmic side of the membrane. The chain crosses the membrane as a helical span at residues 51–71 (TLIHLLKGNIGTGLLGLPLAV). The Extracellular portion of the chain corresponds to 72–77 (KNAGLL). A helical transmembrane segment spans residues 78–98 (LGPLSLLVIGIVAVHCMGILV). Over 99-140 (KCAHHLCRRLNKPFLDYGDTVMYGLECSPSTWIRNHSHWGRR) the chain is Cytoplasmic. The helical transmembrane segment at 141 to 161 (IVDFFLVVTQLGFCCVYFVFL) threads the bilayer. Over 162–189 (ADNFKQVIEAANGTTTNCNNNETVILTP) the chain is Extracellular. Residues Asn-173 and Asn-182 are each glycosylated (N-linked (GlcNAc...) asparagine). Cys-179 and Cys-328 are disulfide-bonded. A helical transmembrane segment spans residues 190 to 210 (TMDSRLYMLTFLPFLVLLSFI). Topologically, residues 211-214 (RNLR) are cytoplasmic. The chain crosses the membrane as a helical span at residues 215–235 (ILSIFSLLANISMFVSLIMIY). At 236–256 (QFIVQRIPDPSHLPLVAPWKT) the chain is on the extracellular side. Residues 257–277 (YPLFFGTAIFAFEGIGVVLPL) form a helical membrane-spanning segment. Topologically, residues 278 to 288 (ENKMKDSQKFP) are cytoplasmic. The chain crosses the membrane as a helical span at residues 289–309 (LILYLGMAIITVLYISLGSLG). Residues 310–341 (YLQFGADIKGSITLNLPNCWLYQSVKLLYSIG) are Extracellular-facing. The chain crosses the membrane as a helical span at residues 342–362 (IFFTYALQFYVAAEIIIPAIV). At 363 to 371 (SRVPERFEL) the chain is on the cytoplasmic side. Residues 372 to 392 (VVDLSARTAMVCVTCVLAVLI) form a helical membrane-spanning segment. Over 393–396 (PRLD) the chain is Extracellular. Residues 397 to 417 (LVISLVGSVSSSALALIIPPL) traverse the membrane as a helical segment. At 418-438 (LEVTTYYGEGISPLTITKDAL) the chain is on the cytoplasmic side. Residues 439-459 (ISILGFVGFVVGTYESLWELI) traverse the membrane as a helical segment. Residues 460 to 475 (QPSHSDSSTNSTSAFI) lie on the Extracellular side of the membrane. Residue Asn-469 is glycosylated (N-linked (GlcNAc...) asparagine).

This sequence belongs to the amino acid/polyamine transporter 2 family. As to expression, widely expressed and predominantly expressed in brain. Within the brain, expression restricted to neurons and not detected in glial cells. Abundant in regions rich in neurons using glutamate and GABA such as Purkinje cells in the cerebellum and pyramidal cells in the hippocampus.

Its subcellular location is the cell membrane. The protein resides in the apical cell membrane. It localises to the lysosome membrane. It catalyses the reaction glycine(in) + H(+)(in) = glycine(out) + H(+)(out). The enzyme catalyses L-proline(out) + H(+)(out) = L-proline(in) + H(+)(in). It carries out the reaction D-proline(out) + H(+)(out) = D-proline(in) + H(+)(in). The catalysed reaction is L-alanine(in) + H(+)(in) = L-alanine(out) + H(+)(out). It catalyses the reaction D-alanine(in) + H(+)(in) = D-alanine(out) + H(+)(out). The enzyme catalyses L-serine(in) + H(+)(in) = L-serine(out) + H(+)(out). It carries out the reaction D-serine(out) + H(+)(out) = D-serine(in) + H(+)(in). The catalysed reaction is 4-aminobutanoate(in) + H(+)(in) = 4-aminobutanoate(out) + H(+)(out). It catalyses the reaction beta-alanine(in) + H(+)(in) = beta-alanine(out) + H(+)(out). In terms of biological role, electrogenic proton/amino acid symporter with selectivity for small apolar L-amino acids, their D-enantiomers and selected amino acid derivatives such as 4-aminobutanoate/GABA. May be involved in the efflux from the lysosomal compartment of neutral amino acids resulting from proteolysis. May play a role in specifying sites for exocytosis in neurons. In Rattus norvegicus (Rat), this protein is Proton-coupled amino acid transporter 1.